We begin with the raw amino-acid sequence, 194 residues long: Protein GrpE (194 aa).

Residues 1–53 (MVENEKTSVEETEEKAETEDEMLTEDPSNEDSDEANEEGNELSEEEKRIAELE) form a disordered region. Over residues 10–44 (EETEEKAETEDEMLTEDPSNEDSDEANEEGNELSE) the composition is skewed to acidic residues.

This sequence belongs to the GrpE family. In terms of assembly, homodimer.

The protein localises to the cytoplasm. Participates actively in the response to hyperosmotic and heat shock by preventing the aggregation of stress-denatured proteins, in association with DnaK and GrpE. It is the nucleotide exchange factor for DnaK and may function as a thermosensor. Unfolded proteins bind initially to DnaJ; upon interaction with the DnaJ-bound protein, DnaK hydrolyzes its bound ATP, resulting in the formation of a stable complex. GrpE releases ADP from DnaK; ATP binding to DnaK triggers the release of the substrate protein, thus completing the reaction cycle. Several rounds of ATP-dependent interactions between DnaJ, DnaK and GrpE are required for fully efficient folding. In Halalkalibacterium halodurans (strain ATCC BAA-125 / DSM 18197 / FERM 7344 / JCM 9153 / C-125) (Bacillus halodurans), this protein is Protein GrpE.